Here is a 94-residue protein sequence, read N- to C-terminus: Defensin-like protein 21 (94 aa).

Positions 1–26 are cleaved as a signal peptide; the sequence is MVRTNVVSFVLFAAIVLCIGSIQIDG. Disulfide bonds link Cys-41–Cys-92, Cys-51–Cys-79, Cys-65–Cys-88, and Cys-69–Cys-90.

It belongs to the DEFL family.

The protein resides in the secreted. The sequence is that of Defensin-like protein 21 from Arabidopsis thaliana (Mouse-ear cress).